Consider the following 242-residue polypeptide: Glucosamine-6-phosphate deaminase (242 aa).

The Proton acceptor; for enolization step role is filled by D67. N136 serves as the catalytic For ring-opening step. H138 (proton acceptor; for ring-opening step) is an active-site residue. E143 (for ring-opening step) is an active-site residue.

The protein belongs to the glucosamine/galactosamine-6-phosphate isomerase family. NagB subfamily.

It carries out the reaction alpha-D-glucosamine 6-phosphate + H2O = beta-D-fructose 6-phosphate + NH4(+). The protein operates within amino-sugar metabolism; N-acetylneuraminate degradation; D-fructose 6-phosphate from N-acetylneuraminate: step 5/5. In terms of biological role, catalyzes the reversible isomerization-deamination of glucosamine 6-phosphate (GlcN6P) to form fructose 6-phosphate (Fru6P) and ammonium ion. The chain is Glucosamine-6-phosphate deaminase from Clostridium perfringens (strain SM101 / Type A).